The sequence spans 130 residues: Protein ApaG (130 aa).

In terms of domain architecture, ApaG spans 3–127; it reads RAVTRGIEVS…FSLDIPEQRR (125 aa).

This Brucella anthropi (strain ATCC 49188 / DSM 6882 / CCUG 24695 / JCM 21032 / LMG 3331 / NBRC 15819 / NCTC 12168 / Alc 37) (Ochrobactrum anthropi) protein is Protein ApaG.